The following is a 125-amino-acid chain: Synaptobrevin (125 aa).

Residues 1 to 46 (MSGPQNPQAGPGGPPSGPPQPGGPPGPPQGPPQPVQQSKRLQQTQA) are disordered. Over 1-103 (MSGPQNPQAG…KRKFWWKNCK (103 aa)) the chain is Cytoplasmic. The span at 12–34 (GGPPSGPPQPGGPPGPPQGPPQP) shows a compositional bias: pro residues. Positions 40 to 100 (RLQQTQAQVE…GKLKRKFWWK (61 aa)) constitute a v-SNARE coiled-coil homology domain. A helical; Anchor for type IV membrane protein transmembrane segment spans residues 104-123 (MMIILGGIVAVIVTVIIVWA). The Vesicular portion of the chain corresponds to 124–125 (AT).

Belongs to the synaptobrevin family.

It is found in the cytoplasmic vesicle. It localises to the secretory vesicle. The protein localises to the synaptic vesicle membrane. Its subcellular location is the synapse. The protein resides in the synaptosome. Intrinsic membrane protein of small synaptic vesicles. The protein is Synaptobrevin of Doryteuthis pealeii (Longfin inshore squid).